Here is a 237-residue protein sequence, read N- to C-terminus: Ribosomal RNA large subunit methyltransferase E (237 aa).

Positions 80, 82, 108, 124, and 148 each coordinate S-adenosyl-L-methionine. Lys188 acts as the Proton acceptor in catalysis.

Belongs to the class I-like SAM-binding methyltransferase superfamily. RNA methyltransferase RlmE family.

Its subcellular location is the cytoplasm. It carries out the reaction uridine(2552) in 23S rRNA + S-adenosyl-L-methionine = 2'-O-methyluridine(2552) in 23S rRNA + S-adenosyl-L-homocysteine + H(+). Functionally, specifically methylates the uridine in position 2552 of 23S rRNA at the 2'-O position of the ribose in the fully assembled 50S ribosomal subunit. The polypeptide is Ribosomal RNA large subunit methyltransferase E (Jannaschia sp. (strain CCS1)).